Consider the following 96-residue polypeptide: Large ribosomal subunit protein uL23 (96 aa).

This sequence belongs to the universal ribosomal protein uL23 family. As to quaternary structure, part of the 50S ribosomal subunit. Contacts protein L29, and trigger factor when it is bound to the ribosome.

In terms of biological role, one of the early assembly proteins it binds 23S rRNA. One of the proteins that surrounds the polypeptide exit tunnel on the outside of the ribosome. Forms the main docking site for trigger factor binding to the ribosome. In Clostridium novyi (strain NT), this protein is Large ribosomal subunit protein uL23.